The following is a 123-amino-acid chain: UPF0102 protein PSEEN4497 (123 aa).

This sequence belongs to the UPF0102 family.

In Pseudomonas entomophila (strain L48), this protein is UPF0102 protein PSEEN4497.